Reading from the N-terminus, the 301-residue chain is MKVGVIMGGISSEREISLKSGKSIVDSINKNKYEVVSIVIDEKEDIINKVKGIDFALLALHGQFGEDGTVQSVLQTLEIPYSGCGPLSSSMCMDKDISKCILKAANIRTAPWINLRRNDKINYEKIEGMGYPVVVKPTHGGSSVATFIIKEEKDIKNAVTEAFKWDSEVIIEKFIKGDEITCPVFGDKMLPVVAIKPKAEFFDFTAKYADGGSDEFVTELPKELHEEVEEMALATYKALKCEVYSRVDMIVTEDKVPYILEVNTLPGMTPNSLIPKSAAGVNISFSELIDMIIDESIKVIR.

One can recognise an ATP-grasp domain in the interval 99-294 (KCILKAANIR…FSELIDMIID (196 aa)). Residue 126-181 (IEGMGYPVVVKPTHGGSSVATFIIKEEKDIKNAVTEAFKWDSEVIIEKFIKGDEIT) coordinates ATP. 3 residues coordinate Mg(2+): D248, E261, and N263.

It belongs to the D-alanine--D-alanine ligase family. Mg(2+) serves as cofactor. It depends on Mn(2+) as a cofactor.

The protein resides in the cytoplasm. It catalyses the reaction 2 D-alanine + ATP = D-alanyl-D-alanine + ADP + phosphate + H(+). It participates in cell wall biogenesis; peptidoglycan biosynthesis. In terms of biological role, cell wall formation. This is D-alanine--D-alanine ligase from Clostridium botulinum (strain Eklund 17B / Type B).